The following is a 354-amino-acid chain: 3'-5' exonuclease (354 aa).

A disordered region spans residues 1–120 (MEKYLIKMPI…PSPEKEKPEK (120 aa)). 3 stretches are compositionally biased toward basic and acidic residues: residues 13-23 (KASEVPKDKAV), 36-50 (TKNDTPKELKNKENA), and 71-91 (KNLDTPETKAEKIATEEENPP). Serine 104, serine 110, and serine 112 each carry phosphoserine. Positions 146-314 (VLQWVEKQKD…GQVIYRELER (169 aa)) constitute a 3'-5' exonuclease domain. The Mg(2+) site is built by aspartate 163, glutamate 165, and aspartate 301.

The protein belongs to the WRNexo family.

Its subcellular location is the nucleus. Functionally, has exonuclease activity on both single-stranded and duplex templates bearing overhangs, but not blunt ended duplex DNA, and cleaves in a 3'-5' direction. Essential for the formation of DNA replication focal centers. Has an important role in maintaining genome stability. The protein is 3'-5' exonuclease of Drosophila erecta (Fruit fly).